The primary structure comprises 194 residues: Early growth response protein 1 (194 aa).

3 C2H2-type zinc fingers span residues 1–18, 24–46, and 52–74; these read CDRR…IRIH, FQCR…IRTH, and FACD…TKIH. Positions 66–88 are disordered; the sequence is ERKRHTKIHLRQKDKKVEKAASV. Positions 69 to 79 are enriched in basic residues; that stretch reads RHTKIHLRQKD.

It belongs to the EGR C2H2-type zinc-finger protein family.

The protein resides in the nucleus. It localises to the cytoplasm. Its function is as follows. Transcriptional regulator. Recognizes and binds to the DNA sequence 5'-GCG(T/G)GGGCG-3'(EGR-site) in the promoter region of target genes. Binds double-stranded target DNA, irrespective of the cytosine methylation status. Regulates the transcription of numerous target genes, and thereby plays an important role in regulating the response to growth factors, DNA damage, and ischemia. Plays a role in the regulation of cell survival, proliferation and cell death. Mediates responses to ischemia and hypoxia; regulates the expression of proteins that are involved in inflammatory processes. Plays a role in regulating the expression of circadian clock genes. The chain is Early growth response protein 1 (EGR1) from Coturnix japonica (Japanese quail).